A 327-amino-acid chain; its full sequence is 4-hydroxy-2-oxoglutarate aldolase, mitochondrial (327 aa).

The N-terminal 25 residues, 1-25 (MLVPRVWSSVRLGLSRVLSRTLRGW), are a transit peptide targeting the mitochondrion. 77–78 (SN) serves as a coordination point for substrate. The active-site Schiff-base intermediate with substrate is the K196. Substrate is bound by residues S198 and G222.

Belongs to the DapA family. As to quaternary structure, homotetramer.

It localises to the mitochondrion. The enzyme catalyses (4S)-4-hydroxy-2-oxoglutarate = glyoxylate + pyruvate. It carries out the reaction (4R)-4-hydroxy-2-oxoglutarate = glyoxylate + pyruvate. Inhibited by divalent cations. In terms of biological role, catalyzes the final step in the metabolic pathway of hydroxyproline. This is 4-hydroxy-2-oxoglutarate aldolase, mitochondrial (HOGA1) from Bos taurus (Bovine).